A 741-amino-acid chain; its full sequence is Ribosome-releasing factor 2, mitochondrial (741 aa).

The transit peptide at 1–29 (MLKYEFLHGLQKRSHYLRQLSGQFFSRSY) directs the protein to the mitochondrion. The tr-type G domain occupies 31 to 310 (SKIRNIGILA…AVNSYLPAPE (280 aa)). GTP is bound by residues 40–47 (AHIDAGKT), 104–108 (DTPGH), and 158–161 (NKMD).

It belongs to the TRAFAC class translation factor GTPase superfamily. Classic translation factor GTPase family. EF-G/EF-2 subfamily.

It is found in the mitochondrion. Mitochondrial GTPase that mediates the disassembly of ribosomes from messenger RNA at the termination of mitochondrial protein biosynthesis. Not involved in the GTP-dependent ribosomal translocation step during translation elongation. This chain is Ribosome-releasing factor 2, mitochondrial, found in Drosophila ananassae (Fruit fly).